Here is a 157-residue protein sequence, read N- to C-terminus: SsrA-binding protein (157 aa).

Residues 133–157 (LHDKRETEKKRDWSREKSRLLRARG) form a disordered region. Positions 135-151 (DKRETEKKRDWSREKSR) are enriched in basic and acidic residues.

Belongs to the SmpB family.

The protein localises to the cytoplasm. Its function is as follows. Required for rescue of stalled ribosomes mediated by trans-translation. Binds to transfer-messenger RNA (tmRNA), required for stable association of tmRNA with ribosomes. tmRNA and SmpB together mimic tRNA shape, replacing the anticodon stem-loop with SmpB. tmRNA is encoded by the ssrA gene; the 2 termini fold to resemble tRNA(Ala) and it encodes a 'tag peptide', a short internal open reading frame. During trans-translation Ala-aminoacylated tmRNA acts like a tRNA, entering the A-site of stalled ribosomes, displacing the stalled mRNA. The ribosome then switches to translate the ORF on the tmRNA; the nascent peptide is terminated with the 'tag peptide' encoded by the tmRNA and targeted for degradation. The ribosome is freed to recommence translation, which seems to be the essential function of trans-translation. This chain is SsrA-binding protein, found in Afipia carboxidovorans (strain ATCC 49405 / DSM 1227 / KCTC 32145 / OM5) (Oligotropha carboxidovorans).